The sequence spans 339 residues: Ketol-acid reductoisomerase (NADP(+)) (339 aa).

Residues 1-182 enclose the KARI N-terminal Rossmann domain; it reads MRVYYDRDAD…GGGRSGIIET (182 aa). NADP(+) contacts are provided by residues 24–27, Lys48, Ser51, Thr53, and 83–86; these read YGSQ and DELQ. Residue His108 is part of the active site. Gly134 contacts NADP(+). Residues 183–328 form the KARI C-terminal knotted domain; that stretch reads NFKEECETDL…AKLRGMMPWI (146 aa). 4 residues coordinate Mg(2+): Asp191, Glu195, Glu227, and Glu231. A substrate-binding site is contributed by Ser252.

The protein belongs to the ketol-acid reductoisomerase family. It depends on Mg(2+) as a cofactor.

It catalyses the reaction (2R)-2,3-dihydroxy-3-methylbutanoate + NADP(+) = (2S)-2-acetolactate + NADPH + H(+). The enzyme catalyses (2R,3R)-2,3-dihydroxy-3-methylpentanoate + NADP(+) = (S)-2-ethyl-2-hydroxy-3-oxobutanoate + NADPH + H(+). It participates in amino-acid biosynthesis; L-isoleucine biosynthesis; L-isoleucine from 2-oxobutanoate: step 2/4. The protein operates within amino-acid biosynthesis; L-valine biosynthesis; L-valine from pyruvate: step 2/4. Involved in the biosynthesis of branched-chain amino acids (BCAA). Catalyzes an alkyl-migration followed by a ketol-acid reduction of (S)-2-acetolactate (S2AL) to yield (R)-2,3-dihydroxy-isovalerate. In the isomerase reaction, S2AL is rearranged via a Mg-dependent methyl migration to produce 3-hydroxy-3-methyl-2-ketobutyrate (HMKB). In the reductase reaction, this 2-ketoacid undergoes a metal-dependent reduction by NADPH to yield (R)-2,3-dihydroxy-isovalerate. The polypeptide is Ketol-acid reductoisomerase (NADP(+)) (Sinorhizobium fredii (strain NBRC 101917 / NGR234)).